The following is a 139-amino-acid chain: D-ribose pyranase (139 aa).

Catalysis depends on H20, which acts as the Proton donor. Substrate contacts are provided by residues D28, H106, and 128–130 (YAN).

The protein belongs to the RbsD / FucU family. RbsD subfamily. As to quaternary structure, homodecamer.

It is found in the cytoplasm. It carries out the reaction beta-D-ribopyranose = beta-D-ribofuranose. It participates in carbohydrate metabolism; D-ribose degradation; D-ribose 5-phosphate from beta-D-ribopyranose: step 1/2. Its function is as follows. Catalyzes the interconversion of beta-pyran and beta-furan forms of D-ribose. The protein is D-ribose pyranase of Photobacterium profundum (strain SS9).